A 259-amino-acid chain; its full sequence is MLLCIDCGNTNTVFSIWDGESWLCTMRTSTHHSRTADAYFTWFSTLLGHYGIDPQIDDVIISSTVPRVVFNLRVFCDRFFNLRPLVVGKPDCALPMEPRVDFGTGVGPDRLANAVGAFARHGGDCVVVDFGTATNFDVVAEDGAYVGGVIAPGVNLSLEALALGAAALPHVDITKPDAVIGTNTVACIQSGVFWGYVGLIEGITTRIKAEYGKPMKVIGTGGLAPLFAQGEVLFDTVEDDLTMYGLTVIHKYNKDKNPS.

An ATP-binding site is contributed by 6 to 13; that stretch reads DCGNTNTV. 107–110 contributes to the substrate binding site; it reads GPDR. Catalysis depends on Asp109, which acts as the Proton acceptor. Residue Asp129 coordinates K(+). Thr132 is an ATP binding site. Thr184 is a binding site for substrate.

It belongs to the type III pantothenate kinase family. As to quaternary structure, homodimer. Requires NH4(+) as cofactor. K(+) is required as a cofactor.

Its subcellular location is the cytoplasm. The catalysed reaction is (R)-pantothenate + ATP = (R)-4'-phosphopantothenate + ADP + H(+). It participates in cofactor biosynthesis; coenzyme A biosynthesis; CoA from (R)-pantothenate: step 1/5. Catalyzes the phosphorylation of pantothenate (Pan), the first step in CoA biosynthesis. In Jannaschia sp. (strain CCS1), this protein is Type III pantothenate kinase.